Consider the following 292-residue polypeptide: ATP synthase gamma chain (292 aa).

It belongs to the ATPase gamma chain family. As to quaternary structure, F-type ATPases have 2 components, CF(1) - the catalytic core - and CF(0) - the membrane proton channel. CF(1) has five subunits: alpha(3), beta(3), gamma(1), delta(1), epsilon(1). CF(0) has three main subunits: a, b and c.

The protein localises to the cell membrane. In terms of biological role, produces ATP from ADP in the presence of a proton gradient across the membrane. The gamma chain is believed to be important in regulating ATPase activity and the flow of protons through the CF(0) complex. The protein is ATP synthase gamma chain of Caldicellulosiruptor saccharolyticus (strain ATCC 43494 / DSM 8903 / Tp8T 6331).